We begin with the raw amino-acid sequence, 235 residues long: Small ribosomal subunit protein uS3 (235 aa).

One can recognise a KH type-2 domain in the interval 39-107 (VRKFLNKELA…PAQINIAEVK (69 aa)). The interval 215–235 (AQSEQQPADKPKKAPRGKGRK) is disordered.

Belongs to the universal ribosomal protein uS3 family. Part of the 30S ribosomal subunit. Forms a tight complex with proteins S10 and S14.

Binds the lower part of the 30S subunit head. Binds mRNA in the 70S ribosome, positioning it for translation. In Haemophilus influenzae (strain PittEE), this protein is Small ribosomal subunit protein uS3.